We begin with the raw amino-acid sequence, 287 residues long: ATP synthase subunit a (287 aa).

Helical transmembrane passes span 38–58 (DSMVLALLLGGLTLLILWTAA), 96–116 (FIAPLGLVVFVWVFLMNAMDM), 139–161 (VVPTADLSTTMGLALAVLGLRFW), 187–207 (PLFALILGLVNLLMQVIEYVA), 225–245 (LVFMLIALMGGAAALSLSGVL), and 259–279 (LFHILVITLQAFIFMMLALIY).

This sequence belongs to the ATPase A chain family. As to quaternary structure, F-type ATPases have 2 components, CF(1) - the catalytic core - and CF(0) - the membrane proton channel. CF(1) has five subunits: alpha(3), beta(3), gamma(1), delta(1), epsilon(1). CF(0) has three main subunits: a(1), b(2) and c(9-12). The alpha and beta chains form an alternating ring which encloses part of the gamma chain. CF(1) is attached to CF(0) by a central stalk formed by the gamma and epsilon chains, while a peripheral stalk is formed by the delta and b chains.

It is found in the cell inner membrane. In terms of biological role, key component of the proton channel; it plays a direct role in the translocation of protons across the membrane. This chain is ATP synthase subunit a, found in Verminephrobacter eiseniae (strain EF01-2).